The sequence spans 188 residues: Protein crossbronx-like (188 aa).

The 160-residue stretch at 15–174 (KQGYHILAEY…ANQVVKLHCG (160 aa)) folds into the UBC core domain.

This sequence belongs to the ubiquitin-conjugating enzyme family. FTS subfamily.

This chain is Protein crossbronx-like, found in Drosophila simulans (Fruit fly).